A 577-amino-acid polypeptide reads, in one-letter code: Anthranilate synthase alpha subunit 1, chloroplastic (577 aa).

The N-terminal 34 residues, 1-34 (MASLVLSLRIAPSTPPLGLGGGRFRGRRGAVACR), are a transit peptide targeting the chloroplast.

The protein belongs to the anthranilate synthase component I family. As to quaternary structure, heterotetramer consisting of two non-identical subunits: a beta subunit and a large alpha subunit.

It is found in the plastid. It localises to the chloroplast. It catalyses the reaction chorismate + L-glutamine = anthranilate + pyruvate + L-glutamate + H(+). It participates in amino-acid biosynthesis; L-tryptophan biosynthesis; L-tryptophan from chorismate: step 1/5. Its activity is regulated as follows. Feedback inhibition by tryptophan. Functionally, part of a heterotetrameric complex that catalyzes the two-step biosynthesis of anthranilate, an intermediate in the biosynthesis of L-tryptophan. In the first step, the glutamine-binding beta subunit of anthranilate synthase (AS) provides the glutamine amidotransferase activity which generates ammonia as a substrate that, along with chorismate, is used in the second step, catalyzed by the large alpha subunit of AS to produce anthranilate. In Oryza sativa subsp. japonica (Rice), this protein is Anthranilate synthase alpha subunit 1, chloroplastic.